Here is a 1704-residue protein sequence, read N- to C-terminus: Phospholipid-transporting ATPase ABCA3 (1704 aa).

Asn14 carries an N-linked (GlcNAc...) asparagine glycan. The helical transmembrane segment at 22–42 (VLVTVLELFLPLLFSGILIWL) threads the bilayer. N-linked (GlcNAc...) asparagine glycosylation is found at Asn53, Asn124, Asn140, and Asn228. The next 6 membrane-spanning stretches (helical) occupy residues 261–283 (YQLP…RAVV), 307–327 (AWFL…TLLF), 344–364 (SLVL…SFMV), 373–393 (IAAA…FFVA), 405–425 (LLSC…IGKF), and 447–467 (FCFG…GLVT). The region spanning 530-763 (IKIKHLSKVF…YGAGYHMTLV (234 aa)) is the ABC transporter 1 domain. 566–573 (GHNGAGKT) contributes to the ATP binding site. Asn620 carries an N-linked (GlcNAc...) asparagine glycan. Transmembrane regions (helical) follow at residues 925–945 (MVAA…LAIH), 1100–1120 (IALN…ILAV), 1144–1164 (SALL…LVVF), 1183–1203 (LLLM…SFFF), 1213–1233 (LTIF…IMRI), 1245–1265 (LDHV…SNFY), and 1310–1330 (MAAS…NLLW). The N-linked (GlcNAc...) asparagine glycan is linked to Asn1350. The ABC transporter 2 domain occupies 1381 to 1614 (LIINELSKVY…FGSGYSLQAK (234 aa)). 1416-1423 (GFNGAGKT) provides a ligand contact to ATP.

The protein belongs to the ABC transporter superfamily. ABCA family. As to quaternary structure, homooligomer; disulfide-linked. N-glycosylated. Localization at intracellular vesicles is accompanied by processing of oligosaccharide from high mannose type to complex type. N-linked glycosylation at Asn-124 and Asn-140 is required for stability and efficient anterograde trafficking and prevents from proteasomal degradation. Post-translationally, proteolytically cleaved by CTSL and to a lower extent by CTSB within multivesicular bodies (MVB) and lamellar bodies (LB) leading to a mature form of 150 kDa. In terms of tissue distribution, highly expressed in the lung and moderately expressed in the kidney, adipose, macrophage, and spleen.

The protein resides in the endosome. Its subcellular location is the multivesicular body membrane. It localises to the cytoplasmic vesicle membrane. The protein localises to the late endosome membrane. It is found in the lysosome membrane. It catalyses the reaction a 1,2-diacyl-sn-glycero-3-phospho-(1'-sn-glycerol)(in) + ATP + H2O = a 1,2-diacyl-sn-glycero-3-phospho-(1'-sn-glycerol)(out) + ADP + phosphate + H(+). It carries out the reaction a 1,2-diacyl-sn-glycero-3-phosphocholine(in) + ATP + H2O = a 1,2-diacyl-sn-glycero-3-phosphocholine(out) + ADP + phosphate + H(+). The enzyme catalyses ATP + H2O + phospholipidSide 1 = ADP + phosphate + phospholipidSide 2.. The catalysed reaction is ATP + H2O + xenobioticSide 1 = ADP + phosphate + xenobioticSide 2.. It catalyses the reaction 1,2-dihexadecanoyl-sn-glycero-3-phosphocholine(in) + ATP + H2O = 1,2-dihexadecanoyl-sn-glycero-3-phosphocholine(out) + ADP + phosphate + H(+). It carries out the reaction cholesterol(in) + ATP + H2O = cholesterol(out) + ADP + phosphate + H(+). Catalyzes the ATP-dependent transport of phospholipids such as phosphatidylcholine and phosphoglycerol from the cytoplasm into the lumen side of lamellar bodies, in turn participates in the lamellar bodies biogenesis and homeostasis of pulmonary surfactant. Transports preferentially phosphatidylcholine containing short acyl chains. In addition plays a role as an efflux transporter of miltefosine across macrophage membranes and free cholesterol (FC) through intralumenal vesicles by removing FC from the cell as a component of surfactant and protects cells from free cholesterol toxicity. This chain is Phospholipid-transporting ATPase ABCA3 (Abca3), found in Mus musculus (Mouse).